The chain runs to 335 residues: Dye-decolorizing peroxidase (335 aa).

The Proton acceptor role is filled by Asp149. Residue His222 participates in heme binding. Residues 312-335 (LPQAATPTLAAGSLSIGSLKGSPR) are targeting peptide.

The protein belongs to the DyP-type peroxidase family. As to quaternary structure, homotetramer, presumably also in the encapsulin nanocompartment. Heme b is required as a cofactor.

It localises to the encapsulin nanocompartment. The catalysed reaction is 2 a phenolic donor + H2O2 = 2 a phenolic radical donor + 2 H2O. Cargo of a type 1 encapsulin nanocompartment in situ; this cargo protects against oxidative stress at low pH. When expressed in the cytoplasm (absence of the encapsulin shell gene) it is almost as protective as the intact nanocompartment; its encapsulation has a modest yet significant effect on protection against oxidative stress at low pH. A heme-dependent peroxidase, it probably does not have deferrochelatase activity. Converts guaiacol and H2O2 to tetraguaiacol, also acts on 2,2'-azino-bis(3-ethylbenzothiazoline-6-sulfonic acid) (ABTS). Retains peroxidase activity when encapsulated but has a reduced set of substrates; acts on ABTS but not guaiacol. The protein is Dye-decolorizing peroxidase of Mycobacterium tuberculosis (strain ATCC 25618 / H37Rv).